The chain runs to 425 residues: Alpha/beta hydrolase xenA (425 aa).

Asp-366 is an active-site residue.

Belongs to the AB hydrolase superfamily. FUS2 hydrolase family. As to quaternary structure, homodimer.

Its pathway is mycotoxin biosynthesis. Its function is as follows. Alpha/beta hydrolase; part of the gene cluster that mediates the biosynthesis of xenoacremones such as xenoacremone A, a compound that shows inhibitory activity toward the PI3K/AKT signaling pathway and which has the ability to induce apoptosis of A549 lung cancer cells. Within the pathway, cooperation of the hybrid PKS-NRPS xenE and the trans-acting enoyl reductase xenG is responsible for the formation of the reduced tyrosine-nonaketide derivative. The alpha/beta hydrolase xenA then accelerates intramolecular nucleophilic attack to give a pyrrolidone derivative. Subsequently, three enzymes, xenF, xenD, and xenC, coordinately participate in the conversion to xenoacremone B. XenF catalyzes sigmatropic rearrangement to form an A-ring, which leads to an unusual intermediate with a hexane ring, which is required for the formation of the tricarbocyclic product. Epoxidation catalyzed by xenD and the formation of the paracyclophane ether catalyzed by xenC initiate a spontaneous intramolecular Diels-Alder (IMDA) reaction to yield xenoacremone B. Spontaneous hydration of xenoacremone B leads to the formation of xenoacremone A, which undergoes subsequent methylation to afford xenoacremone C. The sequence is that of Alpha/beta hydrolase xenA from Xenoacremonium sinensis (Endophyte fungus).